The sequence spans 188 residues: RNA 2',3'-cyclic phosphodiesterase (188 aa).

The Proton donor role is filled by H42. Short sequence motifs (HXTX) lie at residues 42-45 and 130-133; these read HMTL and HVTI. H130 (proton acceptor) is an active-site residue.

It belongs to the 2H phosphoesterase superfamily. ThpR family.

The catalysed reaction is a 3'-end 2',3'-cyclophospho-ribonucleotide-RNA + H2O = a 3'-end 2'-phospho-ribonucleotide-RNA + H(+). In terms of biological role, hydrolyzes RNA 2',3'-cyclic phosphodiester to an RNA 2'-phosphomonoester. In Aquifex aeolicus (strain VF5), this protein is RNA 2',3'-cyclic phosphodiesterase.